Here is a 368-residue protein sequence, read N- to C-terminus: 4-hydroxy-3-methylbut-2-en-1-yl diphosphate synthase (flavodoxin) (368 aa).

Residues Cys271, Cys274, Cys306, and Glu313 each contribute to the [4Fe-4S] cluster site.

The protein belongs to the IspG family. [4Fe-4S] cluster is required as a cofactor.

The catalysed reaction is (2E)-4-hydroxy-3-methylbut-2-enyl diphosphate + oxidized [flavodoxin] + H2O + 2 H(+) = 2-C-methyl-D-erythritol 2,4-cyclic diphosphate + reduced [flavodoxin]. The protein operates within isoprenoid biosynthesis; isopentenyl diphosphate biosynthesis via DXP pathway; isopentenyl diphosphate from 1-deoxy-D-xylulose 5-phosphate: step 5/6. Converts 2C-methyl-D-erythritol 2,4-cyclodiphosphate (ME-2,4cPP) into 1-hydroxy-2-methyl-2-(E)-butenyl 4-diphosphate. This Mannheimia succiniciproducens (strain KCTC 0769BP / MBEL55E) protein is 4-hydroxy-3-methylbut-2-en-1-yl diphosphate synthase (flavodoxin).